The sequence spans 436 residues: GDP-mannose 6-dehydrogenase (436 aa).

NAD(+)-binding residues include Tyr10, Val11, Asp30, Lys35, Thr86, and Thr124. GDP-alpha-D-mannuronate contacts are provided by Glu161, Lys210, Asn214, His217, Asn225, Tyr256, Tyr257, Arg259, Phe262, and Gly265. Cys268 (nucleophile) is an active-site residue. Lys271 serves as a coordination point for NAD(+). An inter-domain linker region spans residues 278–295 (YRASQLDVEHPMLGSLMR). Lys324 contacts GDP-alpha-D-mannuronate. Arg331 provides a ligand contact to NAD(+).

It belongs to the UDP-glucose/GDP-mannose dehydrogenase family. Forms a domain-swapped dimer with each peptide contributing to each active site. The dimers assemble further. X-ray structures indicate this enzyme exists as a homotetramer PubMed:12705829, but kinetic and physical results obtained in PubMed:2470755 and PubMed:12135385 indicate that it is probably a homohexamer.

The catalysed reaction is GDP-alpha-D-mannose + 2 NAD(+) + H2O = GDP-alpha-D-mannuronate + 2 NADH + 3 H(+). Its pathway is glycan biosynthesis; alginate biosynthesis. With respect to regulation, inhibited by GMP, ATP, GDP-D-glucose and maltose. Inhibited by GMP and deamidoNAD. Its function is as follows. Catalyzes the oxidation of guanosine diphospho-D-mannose (GDP-D-mannose) to GDP-D-mannuronic acid, a precursor for alginate polymerization. The alginate layer causes a mucoid phenotype and provides a protective barrier against host immune defenses and antibiotics. Other sugars are not used as substrates. In Pseudomonas aeruginosa (strain ATCC 15692 / DSM 22644 / CIP 104116 / JCM 14847 / LMG 12228 / 1C / PRS 101 / PAO1), this protein is GDP-mannose 6-dehydrogenase.